The chain runs to 393 residues: Thyrotropin-releasing hormone receptor (393 aa).

Topologically, residues 1–28 are extracellular; that stretch reads MENDTVSEMNQTELQPQAAVALEYQVVT. 2 N-linked (GlcNAc...) asparagine glycosylation sites follow: Asn-3 and Asn-10. A helical transmembrane segment spans residues 29-51; sequence ILLVVIICGLGIVGNIMVVLVVM. Residues 52–61 are Cytoplasmic-facing; the sequence is RTKHMRTPTN. The chain crosses the membrane as a helical span at residues 62 to 83; that stretch reads CYLVSLAVADLMVLVAAGLPNI. Residues 84–99 are Extracellular-facing; it reads TDSIYGSWVYGYVGCL. The cysteines at positions 98 and 179 are disulfide-linked. A helical membrane pass occupies residues 100-121; the sequence is CITYLQYLGINASSCSITAFTI. The Cytoplasmic portion of the chain corresponds to 122-144; the sequence is ERYIAICHPIKAQFLCTFSRAKK. A helical transmembrane segment spans residues 145 to 168; it reads IIIFVWAFTSIYCMLWFFLLDLNI. Residues 169–193 lie on the Extracellular side of the membrane; the sequence is STYKNAVVVSCGYKISRNYYSPIYL. A helical transmembrane segment spans residues 194–215; that stretch reads MDFGVFYVVPMILATVLYGFIA. Residues 216–266 are Cytoplasmic-facing; that stretch reads RILFLNPIPSDPKENSKMWKNDSIHQNKNLNLNATNRCFNSTVSSRKQVTK. The helical transmembrane segment at 267-288 threads the bilayer; it reads MLAVVVILFALLWMPYRTLVVV. Topologically, residues 289–296 are extracellular; it reads NSFLSSPF. The chain crosses the membrane as a helical span at residues 297–319; sequence QENWFLLFCRICIYLNSAINPVI. Topologically, residues 320–393 are cytoplasmic; sequence YNLMSQKFRA…FDDTCLASEN (74 aa).

This sequence belongs to the G-protein coupled receptor 1 family.

It is found in the cell membrane. Its function is as follows. Receptor for thyrotropin-releasing hormone (TRH). Upon ligand binding, this G-protein-coupled receptor triggers activation of the phosphatidylinositol (IP3)-calcium-protein kinase C (PKC) pathway. This is Thyrotropin-releasing hormone receptor (Trhr) from Mus musculus (Mouse).